A 480-amino-acid chain; its full sequence is Protein nucleotidyltransferase YdiU (480 aa).

ATP is bound by residues G86, G88, R89, K109, D121, G122, R172, and R179. Residue D248 is the Proton acceptor of the active site. 2 residues coordinate Mg(2+): N249 and D258. Position 258 (D258) interacts with ATP.

Belongs to the SELO family. Requires Mg(2+) as cofactor. The cofactor is Mn(2+).

It carries out the reaction L-seryl-[protein] + ATP = 3-O-(5'-adenylyl)-L-seryl-[protein] + diphosphate. The catalysed reaction is L-threonyl-[protein] + ATP = 3-O-(5'-adenylyl)-L-threonyl-[protein] + diphosphate. The enzyme catalyses L-tyrosyl-[protein] + ATP = O-(5'-adenylyl)-L-tyrosyl-[protein] + diphosphate. It catalyses the reaction L-histidyl-[protein] + UTP = N(tele)-(5'-uridylyl)-L-histidyl-[protein] + diphosphate. It carries out the reaction L-seryl-[protein] + UTP = O-(5'-uridylyl)-L-seryl-[protein] + diphosphate. The catalysed reaction is L-tyrosyl-[protein] + UTP = O-(5'-uridylyl)-L-tyrosyl-[protein] + diphosphate. Its function is as follows. Nucleotidyltransferase involved in the post-translational modification of proteins. It can catalyze the addition of adenosine monophosphate (AMP) or uridine monophosphate (UMP) to a protein, resulting in modifications known as AMPylation and UMPylation. The sequence is that of Protein nucleotidyltransferase YdiU from Salmonella schwarzengrund (strain CVM19633).